Here is a 131-residue protein sequence, read N- to C-terminus: Cyclin-dependent kinase 4 inhibitor B (131 aa).

4 ANK repeats span residues 6 to 35, 39 to 67, 72 to 101, and 105 to 131; these read GGDA…DPNR, FGRR…DPNC, TLTR…RLDV, and WGRL…TAGD.

The protein belongs to the CDKN2 cyclin-dependent kinase inhibitor family. In terms of assembly, heterodimer of CDKN2B with CDK4 or CDK6.

In terms of biological role, interacts strongly with CDK4 and CDK6. Potent inhibitor. Potential effector of TGF-beta induced cell cycle arrest. The polypeptide is Cyclin-dependent kinase 4 inhibitor B (CDKN2B) (Bos taurus (Bovine)).